The following is a 741-amino-acid chain: T-box transcription factor TBX3 (741 aa).

Residues 107–220 (LEAKELWDQF…NNISDKHGFT (114 aa)) constitute a DNA-binding region (T-box; first part). A DNA-binding region (T-box; second part) is located at residues 241-305 (ILNSMHKYQP…NNPFAKGFRD (65 aa)). Phosphoserine is present on serine 369. The disordered stretch occupies residues 369 to 469 (SEAESDAEAE…EGPVATKVDE (101 aa)). Composition is skewed to basic and acidic residues over residues 377-386 (AESKEEHGPE) and 420-437 (SRAR…DSRH). Phosphoserine occurs at positions 432, 438, 456, 705, 736, 738, and 740. A compositionally biased stretch (polar residues) spans 438 to 447 (SPATISSSTR).

In terms of assembly, interacts with PML. In terms of tissue distribution, in adults, highest levels in lung. Also found in brain, heart, kidney, liver and ovary.

It is found in the nucleus. Functionally, transcriptional repressor involved in developmental processes. Binds to the palindromic T site 5'-TTCACACCTAGGTGTGAA-3' DNA sequence, or a half-site, which are present in the regulatory region of several genes. Probably plays a role in limb pattern formation. Required for mammary placode induction, and maintenance of the mammary buds during development. Involved in branching morphogenesis in both developing lungs and adult mammary glands, via negative modulation of target genes; acting redundantly with TBX2. Required, together with TBX2, to maintain cell proliferation in the embryonic lung mesenchyme; perhaps acting downstream of SHH, BMP and TGFbeta signaling. Involved in modulating early inner ear development, acting independently of, and also redundantly with, TBX2 in different subregions of the developing ear. Acts as a negative regulator of PML function in cellular senescence. This chain is T-box transcription factor TBX3 (Tbx3), found in Mus musculus (Mouse).